Here is a 315-residue protein sequence, read N- to C-terminus: Methionyl-tRNA formyltransferase (315 aa).

(6S)-5,6,7,8-tetrahydrofolate is bound at residue 113 to 116; it reads SLLP.

Belongs to the Fmt family.

The enzyme catalyses L-methionyl-tRNA(fMet) + (6R)-10-formyltetrahydrofolate = N-formyl-L-methionyl-tRNA(fMet) + (6S)-5,6,7,8-tetrahydrofolate + H(+). In terms of biological role, attaches a formyl group to the free amino group of methionyl-tRNA(fMet). The formyl group appears to play a dual role in the initiator identity of N-formylmethionyl-tRNA by promoting its recognition by IF2 and preventing the misappropriation of this tRNA by the elongation apparatus. The protein is Methionyl-tRNA formyltransferase of Yersinia pseudotuberculosis serotype O:1b (strain IP 31758).